The chain runs to 290 residues: Fructose-1,6-bisphosphatase class 1 (290 aa).

Positions 78, 96, 98, and 99 each coordinate Mg(2+). Substrate is bound by residues Asp99–Ser102, Tyr201, and Lys226. Residue Glu232 coordinates Mg(2+).

This sequence belongs to the FBPase class 1 family. Homotetramer. Mg(2+) is required as a cofactor.

Its subcellular location is the cytoplasm. It catalyses the reaction beta-D-fructose 1,6-bisphosphate + H2O = beta-D-fructose 6-phosphate + phosphate. It functions in the pathway carbohydrate biosynthesis; gluconeogenesis. The sequence is that of Fructose-1,6-bisphosphatase class 1 from Helicobacter pylori (strain G27).